Consider the following 957-residue polypeptide: Sorting nexin-13 (957 aa).

The 188-residue stretch at 97–284 folds into the PXA domain; the sequence is ANIIDEPLQQ…YVIWMIRDSN (188 aa). An RGS domain is found at 373-511; that stretch reads PLDSILVDNV…SFRQNALYVR (139 aa). Residues 559–680 form the PX domain; that stretch reads VQLHAYISDT…DFLENKAYSK (122 aa). 4 residues coordinate a 1,2-diacyl-sn-glycero-3-phospho-(1D-myo-inositol-3-phosphate): Arg601, Ser603, Lys628, and Arg642.

This sequence belongs to the sorting nexin family.

It is found in the early endosome membrane. Its function is as follows. May be involved in several stages of intracellular trafficking. Acts as a GAP for Galphas. May play a role in endosome homeostasis. In Mus musculus (Mouse), this protein is Sorting nexin-13 (Snx13).